A 198-amino-acid polypeptide reads, in one-letter code: GTP cyclohydrolase-2 (198 aa).

52–56 serves as a coordination point for GTP; that stretch reads RMHSE. Residues Cys-57, Cys-68, and Cys-70 each contribute to the Zn(2+) site. GTP contacts are provided by residues Gln-73, 94–96, and Thr-116; that span reads EGR. Residue Asp-128 is the Proton acceptor of the active site. The active-site Nucleophile is Arg-130. 2 residues coordinate GTP: Thr-151 and Lys-156.

It belongs to the GTP cyclohydrolase II family. Zn(2+) serves as cofactor.

The catalysed reaction is GTP + 4 H2O = 2,5-diamino-6-hydroxy-4-(5-phosphoribosylamino)-pyrimidine + formate + 2 phosphate + 3 H(+). It participates in cofactor biosynthesis; riboflavin biosynthesis; 5-amino-6-(D-ribitylamino)uracil from GTP: step 1/4. Its function is as follows. Catalyzes the conversion of GTP to 2,5-diamino-6-ribosylamino-4(3H)-pyrimidinone 5'-phosphate (DARP), formate and pyrophosphate. The chain is GTP cyclohydrolase-2 from Vibrio parahaemolyticus serotype O3:K6 (strain RIMD 2210633).